The following is a 303-amino-acid chain: Glutathione transport system permease protein GsiD (303 aa).

6 helical membrane-spanning segments follow: residues 40 to 60 (AMTA…ARWI), 105 to 125 (LAAG…LGLL), 144 to 164 (LFAF…GSGI), 165 to 185 (ANVI…LVRG), 222 to 242 (IVVF…SLSF), and 266 to 286 (VIAP…VLAF). The region spanning 101–290 (AQISLAAGVF…LTVLAFNLLG (190 aa)) is the ABC transmembrane type-1 domain.

Belongs to the binding-protein-dependent transport system permease family. The complex is composed of two ATP-binding proteins (GsiA), two transmembrane proteins (GsiC and GsiD) and a solute-binding protein (GsiB).

Its subcellular location is the cell inner membrane. Its function is as follows. Part of the ABC transporter complex GsiABCD involved in glutathione import. Probably responsible for the translocation of the substrate across the membrane. The chain is Glutathione transport system permease protein GsiD from Escherichia coli O157:H7.